Here is a 248-residue protein sequence, read N- to C-terminus: Ureidoacrylate amidohydrolase RutB (248 aa).

Catalysis depends on Asp41, which acts as the Proton acceptor. Lys150 is a catalytic residue. Residue Cys183 is the Nucleophile of the active site.

The protein belongs to the isochorismatase family. RutB subfamily.

It catalyses the reaction (Z)-3-ureidoacrylate + H2O + H(+) = (Z)-3-aminoacrylate + NH4(+) + CO2. The enzyme catalyses (Z)-3-ureidoacrylate + H2O = (Z)-3-aminoacrylate + carbamate + H(+). The catalysed reaction is (Z)-2-methylureidoacrylate + H2O + H(+) = (Z)-2-methylaminoacrylate + NH4(+) + CO2. Its function is as follows. Hydrolyzes ureidoacrylate to form aminoacrylate and carbamate. The carbamate hydrolyzes spontaneously, thereby releasing one of the nitrogen atoms of the pyrimidine ring as ammonia and one of its carbon atoms as CO2. The protein is Ureidoacrylate amidohydrolase RutB of Methylorubrum extorquens (strain CM4 / NCIMB 13688) (Methylobacterium extorquens).